The sequence spans 631 residues: tRNA uridine 5-carboxymethylaminomethyl modification enzyme MnmG (631 aa).

FAD contacts are provided by residues 13 to 18, valine 125, and serine 180; that span reads GGGHAG. 273–287 is an NAD(+) binding site; sequence GPRYCPSIEDKVMRF. FAD is bound at residue glutamine 370.

It belongs to the MnmG family. As to quaternary structure, homodimer. Heterotetramer of two MnmE and two MnmG subunits. The cofactor is FAD.

Its subcellular location is the cytoplasm. In terms of biological role, NAD-binding protein involved in the addition of a carboxymethylaminomethyl (cmnm) group at the wobble position (U34) of certain tRNAs, forming tRNA-cmnm(5)s(2)U34. In Vibrio campbellii (strain ATCC BAA-1116), this protein is tRNA uridine 5-carboxymethylaminomethyl modification enzyme MnmG.